The primary structure comprises 273 residues: Diaminopimelate epimerase (273 aa).

Substrate-binding residues include asparagine 11 and asparagine 60. The active-site Proton donor is cysteine 69. Residues 70–71 (GN), asparagine 181, and 199–200 (ER) contribute to the substrate site. Residue cysteine 209 is the Proton acceptor of the active site. 210 to 211 (GT) contributes to the substrate binding site.

It belongs to the diaminopimelate epimerase family. Homodimer.

The protein resides in the cytoplasm. It catalyses the reaction (2S,6S)-2,6-diaminopimelate = meso-2,6-diaminopimelate. It functions in the pathway amino-acid biosynthesis; L-lysine biosynthesis via DAP pathway; DL-2,6-diaminopimelate from LL-2,6-diaminopimelate: step 1/1. Its function is as follows. Catalyzes the stereoinversion of LL-2,6-diaminopimelate (L,L-DAP) to meso-diaminopimelate (meso-DAP), a precursor of L-lysine and an essential component of the bacterial peptidoglycan. This chain is Diaminopimelate epimerase, found in Helicobacter pylori (strain ATCC 700392 / 26695) (Campylobacter pylori).